Consider the following 349-residue polypeptide: Threonine-rich protein (349 aa).

Positions 1–19 (MKGLTLACIAATVVAASHA) are cleaved as a signal peptide. Residue N257 is glycosylated (N-linked (GlcNAc...) asparagine). The disordered stretch occupies residues 300–326 (QPDVSPMSVRKRRQAESAEEDDDLVGD). Acidic residues predominate over residues 316 to 326 (SAEEDDDLVGD). Positions 316–349 (SAEEDDDLVGDMEDLKELEQEIQEALEEVEKLDV) form a coiled coil.

Component of the acid-insoluble and acid-soluble organic matrix of calcified layers of the shell (at protein level).

Its subcellular location is the secreted. The protein is Threonine-rich protein of Lottia gigantea (Giant owl limpet).